The chain runs to 154 residues: Ribosomal RNA-processing protein 14-N (154 aa).

The disordered stretch occupies residues 36-154; that stretch reads WKQKKSTLEE…KHKASPRAGF (119 aa). Ser-80 is subject to Phosphoserine. At Thr-83 the chain carries Phosphothreonine. Positions 105-133 are enriched in basic and acidic residues; the sequence is QDLREKRKAGDLNQKRQNKRPVENEKDSQ. Over residues 140–154 the composition is skewed to basic residues; it reads KVQKKKHKASPRAGF.

The protein belongs to the SURF6 family.

Its subcellular location is the nucleus. The protein localises to the nucleolus. Involved in ribosome biogenesis and cell polarity. Required for the synthesis of both 40S and 60S ribosomal subunits and may also play some direct role in correct positioning of the mitotic spindle during mitosis. In Schizosaccharomyces pombe (strain 972 / ATCC 24843) (Fission yeast), this protein is Ribosomal RNA-processing protein 14-N (rrp14n).